Consider the following 303-residue polypeptide: Acetylglutamate kinase (303 aa).

Residues 67-68, R89, and N193 each bind substrate; that span reads GG.

The protein belongs to the acetylglutamate kinase family. ArgB subfamily.

The protein localises to the cytoplasm. The enzyme catalyses N-acetyl-L-glutamate + ATP = N-acetyl-L-glutamyl 5-phosphate + ADP. It participates in amino-acid biosynthesis; L-arginine biosynthesis; N(2)-acetyl-L-ornithine from L-glutamate: step 2/4. Functionally, catalyzes the ATP-dependent phosphorylation of N-acetyl-L-glutamate. The chain is Acetylglutamate kinase from Acinetobacter baylyi (strain ATCC 33305 / BD413 / ADP1).